The chain runs to 364 residues: MSKKRNNLLIAASGTGGHIFPALAVSKKVEKDWDIHWLGVTKRLDSEFVPSKYNLLTLNLETPKKNIFRVFQYLKILFSIFNIIKILKEKKINLVFTTGGYISAPTILAAKWLKIPVILHESNLIPGTVTKYFGFLCEFVLLGFKDTNYYLKNCKTIFTGTPLRDQFYEINPLPKWVPRGKGPLLIVMGGSQGAKMINEIFYESIDFLIKQNFRIVHIIGENNSNNLVKFKSNNYVQKKFTNQIASLMQNCELVISRSGAGTINELIQTGKPSILIPYPNSKNNHQEKNAMILSSIGGAILMNQNQISKLFFEETLKRILKFKLKKGKPKYEILDLMKENIKNLDTLKSTNEIKKLINYFLKEF.

UDP-N-acetyl-alpha-D-glucosamine-binding positions include 15–17, asparagine 123, arginine 164, serine 191, and glutamine 286; that span reads TGG.

The protein belongs to the glycosyltransferase 28 family. MurG subfamily.

The protein localises to the cell inner membrane. It carries out the reaction di-trans,octa-cis-undecaprenyl diphospho-N-acetyl-alpha-D-muramoyl-L-alanyl-D-glutamyl-meso-2,6-diaminopimeloyl-D-alanyl-D-alanine + UDP-N-acetyl-alpha-D-glucosamine = di-trans,octa-cis-undecaprenyl diphospho-[N-acetyl-alpha-D-glucosaminyl-(1-&gt;4)]-N-acetyl-alpha-D-muramoyl-L-alanyl-D-glutamyl-meso-2,6-diaminopimeloyl-D-alanyl-D-alanine + UDP + H(+). The protein operates within cell wall biogenesis; peptidoglycan biosynthesis. In terms of biological role, cell wall formation. Catalyzes the transfer of a GlcNAc subunit on undecaprenyl-pyrophosphoryl-MurNAc-pentapeptide (lipid intermediate I) to form undecaprenyl-pyrophosphoryl-MurNAc-(pentapeptide)GlcNAc (lipid intermediate II). The chain is UDP-N-acetylglucosamine--N-acetylmuramyl-(pentapeptide) pyrophosphoryl-undecaprenol N-acetylglucosamine transferase from Prochlorococcus marinus subsp. pastoris (strain CCMP1986 / NIES-2087 / MED4).